A 145-amino-acid polypeptide reads, in one-letter code: 3-dehydroquinate dehydratase (145 aa).

Tyrosine 23 (proton acceptor) is an active-site residue. 3 residues coordinate substrate: asparagine 75, histidine 81, and aspartate 88. Residue histidine 101 is the Proton donor of the active site. Residues 102 to 103 and arginine 112 each bind substrate; that span reads LS.

Belongs to the type-II 3-dehydroquinase family. Homododecamer.

It catalyses the reaction 3-dehydroquinate = 3-dehydroshikimate + H2O. The protein operates within metabolic intermediate biosynthesis; chorismate biosynthesis; chorismate from D-erythrose 4-phosphate and phosphoenolpyruvate: step 3/7. Its function is as follows. Catalyzes a trans-dehydration via an enolate intermediate. The protein is 3-dehydroquinate dehydratase of Legionella pneumophila (strain Paris).